The following is a 258-amino-acid chain: Type II restriction enzyme HincII (258 aa).

It carries out the reaction Endonucleolytic cleavage of DNA to give specific double-stranded fragments with terminal 5'-phosphates.. Functionally, a P subtype restriction enzyme that recognizes the double-stranded sequence 5'-GTYRAC-3' and cleaves after Y-3. The protein is Type II restriction enzyme HincII (hincIIR) of Haemophilus influenzae.